Reading from the N-terminus, the 155-residue chain is UPF0178 protein ACICU_02858 (155 aa).

Residues 120 to 155 are disordered; the sequence is GAGVQTGGPPPISERDKREFSSALDQTILKQKRKTA.

Belongs to the UPF0178 family.

In Acinetobacter baumannii (strain ACICU), this protein is UPF0178 protein ACICU_02858.